We begin with the raw amino-acid sequence, 859 residues long: Envelope glycoprotein (859 aa).

Positions 1–6 (MVSIAF) are excised as a propeptide. At 7-614 (YGGIPGGIST…KDLWSHIGNW (608 aa)) the chain is on the extracellular side. N40, N112, N141, N148, N186, N214, N233, N244, N340, N368, N399, N406, N411, and N422 each carry an N-linked (GlcNAc...) asparagine; by host glycan. Positions 446–466 (FGISAIVAAIVAATAIAASAT) are fusion peptide. N-linked (GlcNAc...) asparagine; by host glycans are attached at residues N483 and N490. The interval 498–513 (LIERQIKILYAMILQT) is immunosuppression. N-linked (GlcNAc...) asparagine; by host glycans are attached at residues N550 and N557. Coiled-coil stretches lie at residues 576-624 (ILTT…SIIK) and 663-699 (KKFH…YYKQ). Residues 615–635 (IPGLGASIIKYIVMFLLIYLL) form a helical membrane-spanning segment. At 636-859 (LTSSPKILRA…TSHVSMPQYV (224 aa)) the chain is on the cytoplasmic side. Residues 745-764 (AAINEHKNGSGGNNPHQGSL) form a disordered region.

In terms of assembly, the mature envelope protein (Env) consists of a trimer of SU-TM heterodimers attached by noncovalent interactions or by a labile interchain disulfide bond. Specific enzymatic cleavages in vivo yield mature proteins. Envelope glycoproteins are synthesized as an inactive precursor that is N-glycosylated and processed likely by host cell furin or by a furin-like protease in the Golgi to yield the mature SU and TM proteins. The cleavage site between SU and TM requires the minimal sequence [KR]-X-[KR]-R.

The protein resides in the virion membrane. The protein localises to the host cell membrane. In terms of biological role, the surface protein (SU) attaches the virus to the host cell by binding to its receptor. This interaction triggers the refolding of the transmembrane protein (TM) and is thought to activate its fusogenic potential by unmasking its fusion peptide. Fusion occurs at the host cell plasma membrane. The transmembrane protein (TM) acts as a class I viral fusion protein. Under the current model, the protein has at least 3 conformational states: pre-fusion native state, pre-hairpin intermediate state, and post-fusion hairpin state. During viral and target cell membrane fusion, the coiled coil regions (heptad repeats) assume a trimer-of-hairpins structure, positioning the fusion peptide in close proximity to the C-terminal region of the ectodomain. The formation of this structure appears to drive apposition and subsequent fusion of viral and target cell membranes. Membranes fusion leads to delivery of the nucleocapsid into the cytoplasm. The polypeptide is Envelope glycoprotein (env) (Equus asinus (Donkey)).